A 118-amino-acid polypeptide reads, in one-letter code: Large ribosomal subunit protein bL20 (118 aa).

This sequence belongs to the bacterial ribosomal protein bL20 family.

Binds directly to 23S ribosomal RNA and is necessary for the in vitro assembly process of the 50S ribosomal subunit. It is not involved in the protein synthesizing functions of that subunit. This is Large ribosomal subunit protein bL20 from Pseudomonas aeruginosa (strain LESB58).